The sequence spans 140 residues: Ribonuclease P protein component (140 aa).

The protein belongs to the RnpA family. Consists of a catalytic RNA component (M1 or rnpB) and a protein subunit.

The enzyme catalyses Endonucleolytic cleavage of RNA, removing 5'-extranucleotides from tRNA precursor.. Functionally, RNaseP catalyzes the removal of the 5'-leader sequence from pre-tRNA to produce the mature 5'-terminus. It can also cleave other RNA substrates such as 4.5S RNA. The protein component plays an auxiliary but essential role in vivo by binding to the 5'-leader sequence and broadening the substrate specificity of the ribozyme. This chain is Ribonuclease P protein component, found in Ralstonia pickettii (strain 12J).